The primary structure comprises 268 residues: Ribosomal RNA large subunit methyltransferase E (268 aa).

Positions 1–60 (MKPPRSRSGSSKDTGPKRIPGKALKSASNPGENDATLDSATARTARNKTVSLRTARGRTT) are disordered. The span at 26–52 (SASNPGENDATLDSATARTARNKTVSL) shows a compositional bias: polar residues. The S-adenosyl-L-methionine site is built by glycine 115, tryptophan 117, aspartate 133, aspartate 149, and aspartate 173. Residue lysine 213 is the Proton acceptor of the active site.

It belongs to the class I-like SAM-binding methyltransferase superfamily. RNA methyltransferase RlmE family.

Its subcellular location is the cytoplasm. The enzyme catalyses uridine(2552) in 23S rRNA + S-adenosyl-L-methionine = 2'-O-methyluridine(2552) in 23S rRNA + S-adenosyl-L-homocysteine + H(+). Its function is as follows. Specifically methylates the uridine in position 2552 of 23S rRNA at the 2'-O position of the ribose in the fully assembled 50S ribosomal subunit. The polypeptide is Ribosomal RNA large subunit methyltransferase E (Gluconobacter oxydans (strain 621H) (Gluconobacter suboxydans)).